We begin with the raw amino-acid sequence, 182 residues long: Vacuolar protein sorting-associated protein 29 (182 aa).

Lys-50 bears the N6-acetyllysine mark.

It belongs to the VPS29 family. As to quaternary structure, component of the commander complex consisting of the CCC subcomplex and the retriever subcomplex. Component of the heterotrimeric retriever complex formed by VPS26C, VPS29 and VPS35L; within the complex interacts with VPS35L. Component of the heterotrimeric retromer cargo-selective complex (CSC), also described as vacuolar protein sorting subcomplex (VPS) formed by VPS26 (VPS26A or VPS26B), VPS29 and VPS35. The CSC has a highly elongated structure with VPS26 and VPS29 binding independently at opposite distal ends of VPS35 as central platform. The CSC is believed to associate with variable sorting nexins to form functionally distinct retromer complex variants. The originally described retromer complex (also called SNX-BAR retromer) is a pentamer containing the CSC and a heterodimeric membrane-deforming subcomplex formed between SNX1 or SNX2 and SNX5 or SNX6 (also called SNX-BAR subcomplex); the respective CSC and SNX-BAR subcomplexes associate with low affinity. The CSC associates with SNX3 to form a SNX3-retromer complex. The CSC associates with SNX27, the WASH complex and the SNX-BAR subcomplex to form the SNX27-retromer complex. Interacts with VPS26A, VPS35, SNX1, SNX2, SNX3, SNX27, WASHC5. Interacts with TBC1D5; this interaction is blocked by VPS35L in the retriever complex. Interacts with SNX17; the interaction is indirect; SNX17 (via its C-terminus) interacts with the retriever complex (via VPS26C and VPS35L). Interacts with VPS26B and ANKRD27.

It localises to the cytoplasm. Its subcellular location is the membrane. The protein localises to the endosome membrane. In terms of biological role, component of the commander complex that is essential for endosomal recycling of transmembrane cargos; the commander complex is composed of the CCC subcomplex and the retriever subcomplex. Component of the retriever complex, which is a heterotrimeric complex related to retromer cargo-selective complex (CSC) and essential for retromer-independent retrieval and recycling of numerous cargos such as integrin alpha-5/beta-1 (ITGA5:ITGB1). Component of the retromer cargo-selective complex (CSC). The CSC is believed to be the core functional component of retromer or respective retromer complex variants acting to prevent missorting of selected transmembrane cargo proteins into the lysosomal degradation pathway. The recruitment of the CSC to the endosomal membrane involves RAB7A and SNX3. The SNX-BAR retromer mediates retrograde transport of cargo proteins from endosomes to the trans-Golgi network (TGN) and is involved in endosome-to-plasma membrane transport for cargo protein recycling. The SNX3-retromer mediates the retrograde endosome-to-TGN transport of WLS distinct from the SNX-BAR retromer pathway. The SNX27-retromer is believed to be involved in endosome-to-plasma membrane trafficking and recycling of a broad spectrum of cargo proteins. The CSC seems to act as recruitment hub for other proteins, such as the WASH complex and TBC1D5. Required to regulate transcytosis of the polymeric immunoglobulin receptor (pIgR-pIgA). In the endosomes, retriever complex drives the retrieval and recycling of NxxY-motif-containing cargo proteins by coupling to SNX17, a cargo essential for the homeostatic maintenance of numerous cell surface proteins associated with processes that include cell migration, cell adhesion, nutrient supply and cell signaling. The recruitment of the retriever complex to the endosomal membrane involves CCC and WASH complexes. Involved in GLUT1 endosome-to-plasma membrane trafficking; the function is dependent of association with ANKRD27. In Mus musculus (Mouse), this protein is Vacuolar protein sorting-associated protein 29 (Vps29).